The primary structure comprises 85 residues: ATP synthase subunit c (85 aa).

The next 2 helical transmembrane spans lie at 10 to 30 (IAVA…FGLL) and 53 to 73 (FIVA…ALFF).

Belongs to the ATPase C chain family. F-type ATPases have 2 components, F(1) - the catalytic core - and F(0) - the membrane proton channel. F(1) has five subunits: alpha(3), beta(3), gamma(1), delta(1), epsilon(1). F(0) has three main subunits: a(1), b(2) and c(10-14). The alpha and beta chains form an alternating ring which encloses part of the gamma chain. F(1) is attached to F(0) by a central stalk formed by the gamma and epsilon chains, while a peripheral stalk is formed by the delta and b chains.

The protein resides in the cell inner membrane. In terms of biological role, f(1)F(0) ATP synthase produces ATP from ADP in the presence of a proton or sodium gradient. F-type ATPases consist of two structural domains, F(1) containing the extramembraneous catalytic core and F(0) containing the membrane proton channel, linked together by a central stalk and a peripheral stalk. During catalysis, ATP synthesis in the catalytic domain of F(1) is coupled via a rotary mechanism of the central stalk subunits to proton translocation. Functionally, key component of the F(0) channel; it plays a direct role in translocation across the membrane. A homomeric c-ring of between 10-14 subunits forms the central stalk rotor element with the F(1) delta and epsilon subunits. The chain is ATP synthase subunit c from Pseudomonas aeruginosa (strain LESB58).